We begin with the raw amino-acid sequence, 535 residues long: Dipeptide-binding protein (535 aa).

A signal peptide spans 1-28 (MRISLKKSGMLKLGLSLVAMTVAASVQA). C34 and C262 are oxidised to a cystine. Residues 48 to 50 (TSG), 383 to 385 (RPY), and 433 to 436 (WTGD) each bind glycyl-L-leucine. C450 and C463 are oxidised to a cystine.

It belongs to the bacterial solute-binding protein 5 family. As to quaternary structure, the complex is composed of two ATP-binding proteins (DppD and DppF), two transmembrane proteins (DppB and DppC) and a solute-binding protein (DppA).

The protein resides in the periplasm. With respect to regulation, heme binding is inhibited by dipeptide. Part of the ABC transporter DppABCDF involved in dipeptide transport. Binds dipeptides and accepts a wide range of side chains, including small neutral, bulky hydrophobic, and positively and negatively charged groups. Tripeptides are poor substrates. DppA alone controls the specificity of the Dpp transporter. In addition, plays a role in chemotaxis toward peptides via interaction with the chemotaxis protein Tap. Its function is as follows. Binds heme. When a foreign outer membrane heme receptor is expressed in E.coli, DppABCDF can also transport heme and its precursor, 5-aminolevulinic acid (ALA), from the periplasm into the cytoplasm. This Escherichia coli (strain K12) protein is Dipeptide-binding protein.